The chain runs to 630 residues: 1-deoxy-D-xylulose-5-phosphate synthase (630 aa).

Thiamine diphosphate contacts are provided by residues His72 and 113–115 (GHS). Asp144 is a Mg(2+) binding site. Thiamine diphosphate is bound by residues 145–146 (GA), Asn173, Tyr284, and Glu367. Residue Asn173 participates in Mg(2+) binding.

The protein belongs to the transketolase family. DXPS subfamily. In terms of assembly, homodimer. The cofactor is Mg(2+). It depends on thiamine diphosphate as a cofactor.

The enzyme catalyses D-glyceraldehyde 3-phosphate + pyruvate + H(+) = 1-deoxy-D-xylulose 5-phosphate + CO2. Its pathway is metabolic intermediate biosynthesis; 1-deoxy-D-xylulose 5-phosphate biosynthesis; 1-deoxy-D-xylulose 5-phosphate from D-glyceraldehyde 3-phosphate and pyruvate: step 1/1. Functionally, catalyzes the acyloin condensation reaction between C atoms 2 and 3 of pyruvate and glyceraldehyde 3-phosphate to yield 1-deoxy-D-xylulose-5-phosphate (DXP). This chain is 1-deoxy-D-xylulose-5-phosphate synthase, found in Geobacillus thermodenitrificans (strain NG80-2).